A 264-amino-acid polypeptide reads, in one-letter code: Phosphonates import ATP-binding protein PhnC (264 aa).

An ABC transporter domain is found at 7 to 254 (LSIRAASKTF…KLIDIYGPEF (248 aa)). Position 39–46 (39–46 (GPSGSGKS)) interacts with ATP.

Belongs to the ABC transporter superfamily. Phosphonates importer (TC 3.A.1.9.1) family. In terms of assembly, the complex is composed of two ATP-binding proteins (PhnC), two transmembrane proteins (PhnE) and a solute-binding protein (PhnD).

It is found in the cell inner membrane. It catalyses the reaction phosphonate(out) + ATP + H2O = phosphonate(in) + ADP + phosphate + H(+). Its function is as follows. Part of the ABC transporter complex PhnCDE involved in phosphonates import. Responsible for energy coupling to the transport system. This Caulobacter vibrioides (strain ATCC 19089 / CIP 103742 / CB 15) (Caulobacter crescentus) protein is Phosphonates import ATP-binding protein PhnC.